The chain runs to 693 residues: Transforming growth factor beta activator LRRC33 (693 aa).

A signal peptide spans 1–19 (MEFPPLWLCLGFHFLIVEW). Residues 20–651 (RSGPGTATAA…CKWEQVDTGL (632 aa)) lie on the Extracellular side of the membrane. The LRRNT domain maps to 29-56 (ASQGGCKVVDGVADCRGLNLASVPSSLP). LRR repeat units follow at residues 58-79 (HSRMLILDANPLKDLWNHSLQA), 82-103 (RLENLSLHSCHLDRISHYAFRE), 106-127 (HLRNLVLADNRLSENYKESAAA), 133-155 (GLRRLDLSGNSLTEDMAALMLQN), 158-179 (SLEVVSLARNTLMRLDDSIFEG), 182-203 (HLVELDLQRNYIFEIEGGAFDG), 206-227 (ELRRLNLAYNNLPCIVDFSLTQ), 228-239 (LRFLNVSYNILE), 251-272 (ELEILDLSHNQLLFFPLLPQCG), and 273-294 (KLHTLLLQDNNMGFYRELYNTS). N-linked (GlcNAc...) asparagine glycosylation is found at Asn74 and Asn85. Asn155 carries an N-linked (GlcNAc...) asparagine glycan. A glycan (N-linked (GlcNAc...) asparagine) is linked at Asn232. Residues Asn292, Asn309, and Asn312 are each glycosylated (N-linked (GlcNAc...) asparagine). 11 LRR repeats span residues 329–350 (ALRFLDMSQNQFRHLPDGFLKK), 353–374 (SLSHLNLNQNCLKMLHIREHEP), 377–398 (ALTELDLSHNQLAELHLAPGLT), 403–424 (NLRVFNLSSNQLLGVPTGLFDN), 427–448 (SITTIDMSHNQISLCPQMVPVD), 463–484 (SLRSLSLDGCGLKALQDCPFQG), 486–507 (SLTHLDLSSNWGVLNGSISPLW), 512–533 (TLQVLSLRDVGLGSGAAEMDFS), 537–558 (NLRALDLSGNSLTSFPKFKGSL), 559–580 (ALRTLDLRRNSLTALPQRVVSE), and 585–605 (GLQTIYLSQNPYDCCGVEGWG). N-linked (GlcNAc...) asparagine glycosylation is found at Asn408 and Asn424. N-linked (GlcNAc...) asparagine glycosylation occurs at Asn500. One can recognise an LRRCT domain in the interval 606-644 (ALQQHFKTVADLSMVTCNLSSKIVRVVELPEGLPQGCKW). Asn623 carries an N-linked (GlcNAc...) asparagine glycan. Residues 652–672 (FYLVLILPSCLTLLVACTVVF) traverse the membrane as a helical segment. Over 673 to 693 (LTFKKPLLQVIKSRCHWSSIY) the chain is Cytoplasmic.

This sequence belongs to the LRRC32/LRRC33 family. Interacts with TGFB1; associates via disulfide bonds with the Latency-associated peptide chain (LAP) regulatory chain of TGFB1, leading to regulate activation of TGF-beta-1. Interacts (via LRR repeats) with TLR2, TLR3, TLR4, TLR9 and probably other Toll-like receptors. Interacts with CYBB/NOX2; the interaction is direct. N-glycosylated. In terms of tissue distribution, mainly expressed in cells of hematopoietic origin, such as in immune organs such as lymph nodes, thymus and spleen. Among leukocytes, expressed at higher level in myeloid cell such as macrophages, neutrophils and dendritic cells. Highly expressed in central nervous system-resident macrophages, including microglia and perivascular macrophages.

It is found in the cell membrane. Its subcellular location is the endoplasmic reticulum membrane. In terms of biological role, key regulator of transforming growth factor beta-1 (TGFB1) specifically required for microglia function in the nervous system. Required for activation of latent TGF-beta-1 in macrophages and microglia: associates specifically via disulfide bonds with the Latency-associated peptide (LAP), which is the regulatory chain of TGFB1, and regulates integrin-dependent activation of TGF-beta-1. TGF-beta-1 activation mediated by LRRC33/NRROS is highly localized: there is little spreading of TGF-beta-1 activated from one microglial cell to neighboring microglia, suggesting the existence of localized and selective activation of TGF-beta-1 by LRRC33/NRROS. Indirectly plays a role in Toll-like receptor (TLR) signaling: ability to inhibit TLR-mediated NF-kappa-B activation and cytokine production is probably a consequence of its role in TGF-beta-1 signaling. The chain is Transforming growth factor beta activator LRRC33 from Mus musculus (Mouse).